A 67-amino-acid chain; its full sequence is Conotoxin Cal14.2c (67 aa).

The N-terminal stretch at 1–20 is a signal peptide; sequence MNVTVMFLVLLLLTMPLTDG. The propeptide occupies 21 to 48; sequence FNIRATNGGELFGPVQRDAGNVLDHGFQ.

Belongs to the conotoxin L superfamily. Post-translationally, contains 2 disulfide bonds. In terms of tissue distribution, expressed by the venom duct.

It localises to the secreted. Probable neurotoxin with unknown target. Possibly targets ion channels. This chain is Conotoxin Cal14.2c, found in Californiconus californicus (California cone).